The following is a 546-amino-acid chain: Chaperonin GroEL 2 (546 aa).

Residues 30–33, lysine 51, 87–91, glycine 415, 479–481, and aspartate 495 each bind ATP; these read TLGP, DGTTT, and NAA. The interval 524–546 is disordered; the sequence is APKDAPPAAPAGVPGAGGPGFDF. Positions 537–546 are enriched in gly residues; it reads PGAGGPGFDF.

The protein belongs to the chaperonin (HSP60) family. As to quaternary structure, forms a cylinder of 14 subunits composed of two heptameric rings stacked back-to-back. Interacts with the co-chaperonin GroES.

The protein resides in the cytoplasm. It carries out the reaction ATP + H2O + a folded polypeptide = ADP + phosphate + an unfolded polypeptide.. Its function is as follows. Together with its co-chaperonin GroES, plays an essential role in assisting protein folding. The GroEL-GroES system forms a nano-cage that allows encapsulation of the non-native substrate proteins and provides a physical environment optimized to promote and accelerate protein folding. In Burkholderia pseudomallei (strain 1710b), this protein is Chaperonin GroEL 2.